The chain runs to 197 residues: Small ribosomal subunit protein uS4y (197 aa).

The region spanning 109–183 (RRLQTIVFKS…VKRRNERAGA (75 aa)) is the S4 RNA-binding domain. The interval 161 to 197 (SLTSPFGGGRPGRVKRRNERAGAKKASGGDGDEDDEE) is disordered.

This sequence belongs to the universal ribosomal protein uS4 family. As to quaternary structure, binds to the translation initiation factors TIF3E1.

This Arabidopsis thaliana (Mouse-ear cress) protein is Small ribosomal subunit protein uS4y (RPS9C).